The sequence spans 114 residues: uncharacterized protein (114 aa).

The 96-residue stretch at 2 to 97 (ESEPLYKLKA…VARKVLARVL (96 aa)) folds into the HTH arsR-type domain. Positions 37–60 (GELLSSDVGLESSNLSQQLGVLRR) form a DNA-binding region, H-T-H motif.

This is an uncharacterized protein from Mycobacterium tuberculosis (strain CDC 1551 / Oshkosh).